Reading from the N-terminus, the 142-residue chain is Midkine-A (142 aa).

Positions 1 to 20 (MELRAFCVILLITVLAVSSQ) are cleaved as a signal peptide. 5 cysteine pairs are disulfide-bonded: C36–C60, C44–C69, C51–C73, C83–C115, and C93–C125.

This sequence belongs to the pleiotrophin family. In terms of tissue distribution, expression at the mid-gastrula stage begins in the neural anlage, and becomes increasingly prominent in the central nervous system and head mesenchyme during neurula stages. Although the mRNA is localized to the developing central nervous system (CNS), the protein is deposited at the neuromuscular junction (NMJ). In the tailbud stage embryo, expressed in the head and tail regions as well as in the CNS. In adults, expression is highest in the brain, eye and bone, with lower expression in the heart and lung. Not expressed in the ovary.

It is found in the secreted. Its function is as follows. Secreted protein that functions as a cytokine and growth factor and mediates its signal through cell-surface proteoglycan and non-proteoglycan receptors. Binds cell-surface proteoglycan receptors via their chondroitin sulfate (CS) groups. Thereby regulates many processes like inflammatory response, cell proliferation, cell adhesion, cell growth, cell survival, tissue regeneration, cell differentiation and cell migration. Inhibits mesoderm formation and promotes neural formation during development. Plays a role in development of the neuromuscular junction (NMJ). Has antibacterial activity against both Gram-positive and Gram-negative bacteria. The chain is Midkine-A (mdk-a) from Xenopus laevis (African clawed frog).